The sequence spans 415 residues: DNA polymerase IV (415 aa).

In terms of domain architecture, UmuC spans 15-196; that stretch reads ILHVDMNCFF…LSVEAMHGIG (182 aa). Mg(2+)-binding residues include Asp-19 and Asp-115. Residue Glu-116 is part of the active site. Residues 235–246 show a composition bias toward basic and acidic residues; the sequence is KRAKGTDDREVD. The disordered stretch occupies residues 235–260; that stretch reads KRAKGTDDREVDPSQMGQHKSVGNSM. Residues 249–260 show a composition bias toward polar residues; the sequence is QMGQHKSVGNSM.

Belongs to the DNA polymerase type-Y family. Monomer. It depends on Mg(2+) as a cofactor.

It localises to the cytoplasm. The enzyme catalyses DNA(n) + a 2'-deoxyribonucleoside 5'-triphosphate = DNA(n+1) + diphosphate. Functionally, poorly processive, error-prone DNA polymerase involved in untargeted mutagenesis. Copies undamaged DNA at stalled replication forks, which arise in vivo from mismatched or misaligned primer ends. These misaligned primers can be extended by PolIV. Exhibits no 3'-5' exonuclease (proofreading) activity. May be involved in translesional synthesis, in conjunction with the beta clamp from PolIII. The protein is DNA polymerase IV of Bacillus cereus (strain ATCC 14579 / DSM 31 / CCUG 7414 / JCM 2152 / NBRC 15305 / NCIMB 9373 / NCTC 2599 / NRRL B-3711).